Consider the following 1432-residue polypeptide: Probable ATP-dependent RNA helicase spindle-E (1432 aa).

Residues 125-292 enclose the Helicase ATP-binding domain; that stretch reads MKAIRENTVV…FATKNGIPPV (168 aa). Position 138–145 (138–145) interacts with ATP; the sequence is GETGCGKT. The DEAH box signature appears at 238 to 241; sequence DEVH. Residues 342-525 enclose the Helicase C-terminal domain; sequence VIDNMERRTE…SSVLKAKELN (184 aa). The region spanning 936–999 is the Tudor domain; sequence AGSITKNLKL…RFMSNQLKRE (64 aa).

Belongs to the DEAD box helicase family. DEAH subfamily.

It is found in the cytoplasm. It catalyses the reaction ATP + H2O = ADP + phosphate + H(+). In terms of biological role, probable ATP-binding RNA helicase which plays a central role during spermatogenesis and oogenesis by repressing transposable elements and preventing their mobilization, which is essential for the germline integrity. Acts via the piRNA metabolic process, which mediates the repression of transposable elements during meiosis by forming complexes composed of piRNAs and Piwi and govern the methylation and subsequent repression of transposons. Involved in the repression of LTR retrotransposon copia. Also involved in telomere regulation by repressing specialized telomeric retroelements HeT-A, TAHRE, and TART; Drosophila telomeres being maintained by transposition of specialized telomeric retroelements. Involved in telomeric trans-silencing, a repression mechanism by which a transposon or a transgene inserted in subtelomeric heterochromatin has the capacity to repress in trans in the female germline, a homologous transposon, or transgene located in euchromatin. Involved in the repression of testis-expressed Stellate genes by the homologous Su(Ste) repeats. Required for anteroposterior and dorsoventral axis formation during oogenesis. This Drosophila willistoni (Fruit fly) protein is Probable ATP-dependent RNA helicase spindle-E (spn-E).